A 599-amino-acid chain; its full sequence is Elongation factor 4 (599 aa).

The 183-residue stretch at 4–186 (ENIRNFSIIA…EIVTKIPPPQ (183 aa)) folds into the tr-type G domain. Residues 16-21 (DHGKST) and 133-136 (NKID) contribute to the GTP site.

It belongs to the TRAFAC class translation factor GTPase superfamily. Classic translation factor GTPase family. LepA subfamily.

It localises to the cell inner membrane. It carries out the reaction GTP + H2O = GDP + phosphate + H(+). Its function is as follows. Required for accurate and efficient protein synthesis under certain stress conditions. May act as a fidelity factor of the translation reaction, by catalyzing a one-codon backward translocation of tRNAs on improperly translocated ribosomes. Back-translocation proceeds from a post-translocation (POST) complex to a pre-translocation (PRE) complex, thus giving elongation factor G a second chance to translocate the tRNAs correctly. Binds to ribosomes in a GTP-dependent manner. The chain is Elongation factor 4 from Geotalea uraniireducens (strain Rf4) (Geobacter uraniireducens).